Consider the following 332-residue polypeptide: Melanocortin receptor 4 (332 aa).

Residues 1-43 (MNSTHHHGMHTSLHFWNRSTYGLHSNASEPLGKGYSEGGCYEQ) are Extracellular-facing. N-linked (GlcNAc...) asparagine glycans are attached at residues Asn2, Asn17, and Asn26. Intrachain disulfides connect Cys40-Cys279 and Cys271-Cys277. Residues 44 to 69 (LFVSPEVFVTLGVISLLENILVIVAI) traverse the membrane as a helical segment. Residues 70–81 (AKNKNLHSPMYF) are Cytoplasmic-facing. A helical transmembrane segment spans residues 82-106 (FICSLAVADMLVSVSNGSETIVITL). The Ca(2+) site is built by Glu100, Asp122, and Asp126. Topologically, residues 107–123 (LNSTDTDAQSFTVNIDN) are extracellular. A helical membrane pass occupies residues 124 to 145 (VIDSVICSSLLASICSLLSIAV). Over 146–165 (DRYFTIFYALQYHNIMTVKR) the chain is Cytoplasmic. A helical transmembrane segment spans residues 166-186 (VGIIISCIWAVCTVSGVLFII). At 187–191 (YSDSS) the chain is on the extracellular side. The chain crosses the membrane as a helical span at residues 192-215 (AVIICLITVFFTMLALMASLYVHM). At 216–248 (FLMARLHIKRIAVLPGTGTIRQGANMKGAITLT) the chain is on the cytoplasmic side. A helical membrane pass occupies residues 249–271 (ILIGVFVVCWAPFFLHLIFYISC). The Extracellular portion of the chain corresponds to 272–280 (PQNPYCVCF). A helical membrane pass occupies residues 281–304 (MSHFNLYLILIMCNSIIDPLIYAL). Residues 305-332 (RSQELRKTFKEIICCYPLGGLCDLSSRY) lie on the Cytoplasmic side of the membrane. The S-palmitoyl cysteine moiety is linked to residue Cys318.

This sequence belongs to the G-protein coupled receptor 1 family. As to quaternary structure, homodimer; disulfide-linked, also forms higher order oligomers. Interacts with GNAS. Interacts with ATRNL1. Interacts with MGRN1; this interaction competes with GNAS-binding and thus inhibits agonist-induced cAMP production. Interacts with MRAP and MRAP2; these associated factors increase ligand-sensitivity and generation of cAMP.

It localises to the cell membrane. Hormone receptor that acts as a key component of the leptin-melanocortin pathway at the intersection of homeostatic maintenance of energetic state. Plays a role in regulating food intake: activation by a stimulating hormone such as anorexigenic alpha-melanocyte stimulating hormone (alpha-MSH) inhibits appetite, whereas binding to a natural antagonist like Agouti-related protein/AGRP promotes appetite. G-protein-coupled receptor that activates conventional Galphas signaling leading to induction of anorexogenic signaling in the hypothalamus to result in negative energy balance. Regulates the firing activity of neurons from the hypothalamus by alpha-MSH and AGRP independently of Galphas signaling by ligand-induced coupling of closure of inwardly rectifying potassium channel KCNJ13. In intestinal epithelial cells, plays a role in the inhibition of hepatic glucose production via nesfatin-1/NUCB2 leading to increased cyclic adenosine monophosphate (cAMP) levels and glucagon-like peptide 1 (GLP-1) secretion in the intestinal epithelium. The polypeptide is Melanocortin receptor 4 (MC4R) (Sus scrofa (Pig)).